A 300-amino-acid polypeptide reads, in one-letter code: Endonuclease III-like protein 1 (300 aa).

Residues 1–19 (MNSGVRMVTRSRSRATRIA) constitute a mitochondrion transit peptide. The segment at 1-53 (MNSGVRMVTRSRSRATRIASEGCREELAPREAAAEGRKSHRPVRHPRRTQKTH) is disordered. The segment covering 22-37 (GCREELAPREAAAEGR) has biased composition (basic and acidic residues). Residues 38–51 (KSHRPVRHPRRTQK) are compositionally biased toward basic residues. One can recognise a HhH domain in the interval 187–211 (RYEGDIPASVAELVALPGVGPKMAH). Catalysis depends on K208, which acts as the Nucleophile; for N-glycosylase activity. C278, C285, C288, and C294 together coordinate [4Fe-4S] cluster.

It belongs to the Nth/MutY family. As to quaternary structure, interacts with YBX1. Interacts with ERCC5/XPG; the interaction stimulates NTHL1 activity and NTHL1 binding to its DNA substrate. [4Fe-4S] cluster is required as a cofactor. Post-translationally, ubiquitinated by TRIM26; leading to proteasomal degradation. Widely expressed.

It is found in the nucleus. The protein localises to the mitochondrion. The catalysed reaction is 2'-deoxyribonucleotide-(2'-deoxyribose 5'-phosphate)-2'-deoxyribonucleotide-DNA = a 3'-end 2'-deoxyribonucleotide-(2,3-dehydro-2,3-deoxyribose 5'-phosphate)-DNA + a 5'-end 5'-phospho-2'-deoxyribonucleoside-DNA + H(+). Bifunctional DNA N-glycosylase with associated apurinic/apyrimidinic (AP) lyase function that catalyzes the first step in base excision repair (BER), the primary repair pathway for the repair of oxidative DNA damage. The DNA N-glycosylase activity releases the damaged DNA base from DNA by cleaving the N-glycosidic bond, leaving an AP site. The AP lyase activity cleaves the phosphodiester bond 3' to the AP site by a beta-elimination. Primarily recognizes and repairs oxidative base damage of pyrimidines. This is Endonuclease III-like protein 1 (Nthl1) from Mus musculus (Mouse).